The following is a 127-amino-acid chain: MSTEALLEQIGKLTLVEAADLVKKMEDKFGISAAAPVAVAAVGAAPAGAGAAEEASTFNVILKGFDSAKKIEVIKLVREITGLGLADAKGLVEAGGKAVKEGVAKAEADDLKKKFEGAGAQIELKAS.

This sequence belongs to the bacterial ribosomal protein bL12 family. Homodimer. Part of the ribosomal stalk of the 50S ribosomal subunit. Forms a multimeric L10(L12)X complex, where L10 forms an elongated spine to which 2 to 4 L12 dimers bind in a sequential fashion. Binds GTP-bound translation factors.

Functionally, forms part of the ribosomal stalk which helps the ribosome interact with GTP-bound translation factors. Is thus essential for accurate translation. The chain is Large ribosomal subunit protein bL12 from Leptospira interrogans serogroup Icterohaemorrhagiae serovar copenhageni (strain Fiocruz L1-130).